A 426-amino-acid polypeptide reads, in one-letter code: DNA polymerase processivity factor component OPG148 (426 aa).

It belongs to the orthopoxvirus OPG148 family. As to quaternary structure, interacts with the DNA polymerase catalytic subunit OPG071. Interacts with UDG/OPG116. Component of the uracil-DNA glycosylase(UDG)-OPG148-polymerase complex; OPG148 and UDG form a heterodimeric processivity factor that associates with OPG071 to form the processive polymerase holoenzyme. Interacts with OPG117.

In terms of biological role, plays an essential role in viral DNA replication by acting as the polymerase processivity factor together with protein OPG116. Serves as a bridge which links the DNA polymerase OPG071 and the uracil DNA glycosylase. The chain is DNA polymerase processivity factor component OPG148 (OPG148) from Vaccinia virus (strain Copenhagen) (VACV).